A 273-amino-acid chain; its full sequence is MAGYISGDTRKVTTHRLVEMKQRGEKISMLTSYDYTTAQIVDGAGIDVILVGDSASNVMAGNVTTLPITLDQMIYHGKSVVRGVKRALVVVDLPFGTYQTSEYEAVTNAIKVMKITHADALKLEGGVEIIDAVKKIIAAGIPIMGHLGLMPQSINKYGTYTVRAKDEEEAEKLLSDAHLLEETGCFALVLEKIPASLAERVARELTIPVIGIGAGGAVDGQVLVVSDMLGMTNGFSPRFLRRYADLHTVMTGAIQQYVDDVKKGDFPNEDEQY.

2 residues coordinate Mg(2+): Asp53 and Asp92. Residues 53–54, Asp92, and Lys122 contribute to the 3-methyl-2-oxobutanoate site; that span reads DS. Glu124 contacts Mg(2+). Glu191 functions as the Proton acceptor in the catalytic mechanism.

Belongs to the PanB family. Homodecamer; pentamer of dimers. Requires Mg(2+) as cofactor.

It localises to the cytoplasm. It catalyses the reaction 3-methyl-2-oxobutanoate + (6R)-5,10-methylene-5,6,7,8-tetrahydrofolate + H2O = 2-dehydropantoate + (6S)-5,6,7,8-tetrahydrofolate. The protein operates within cofactor biosynthesis; (R)-pantothenate biosynthesis; (R)-pantoate from 3-methyl-2-oxobutanoate: step 1/2. Functionally, catalyzes the reversible reaction in which hydroxymethyl group from 5,10-methylenetetrahydrofolate is transferred onto alpha-ketoisovalerate to form ketopantoate. In Phocaeicola vulgatus (strain ATCC 8482 / DSM 1447 / JCM 5826 / CCUG 4940 / NBRC 14291 / NCTC 11154) (Bacteroides vulgatus), this protein is 3-methyl-2-oxobutanoate hydroxymethyltransferase.